Consider the following 1128-residue polypeptide: MQGAQTSEDNLGSQSQPGPCGYIYFYPLATYPLREVATLGTGYAGHRCLTVPLLCGITVEPGFSINVKALHRRPDPNCGLLRATSYHRDIYVFHNAHMVPPIFEGPGLEALCGETREVFGYDAYSALPRESSEPGDFFPEGLDPSAYLGAVAITEAFKERLYSGNLVAIPSLKQEVAVGQSASVRVPLYDKEVFPEGVPQLRQFYNSDLSRCMHEALYTGLAQALRVRRVGKLVELLEKQSLQDQAKVAKVAPLKEFPASTISHPDSGALMIVDSAACELAVSYAPAMLEASHETPASLNYDSWPLFADCEGPEARVAALHRYNASLAPHVSTQIFATNSVLYVSGVSKSTGQGKESLFNSFYMTHGLGTLQEGTWDPCRRPCFSGWGGPDVTGTNGPGNYAVEHLVYAASFSPNLLARYAYYLQFCQGQKSSLTPVPETGSYVAGAAASPMCSLCEGRAPAVCLNTLFFRLRDRFPPVMSTQRRDPYVISGASGSYNETDFLGNFLNFIDKEDDGQRPDDEPRYTYWQLNQNLLERLSRLGIDAEGKLEKEPHGPRDFVKMFKDVDAAVDAEVVQFMNSMAKNNITYKDLVKSCYHVMQYSCNPFAQPACPIFTQLFYRSLLTILQDISLPICMCYENDNPGLGQSPPEWLKGHYQTLCTNFRSLAIDKGVLTAKEAKVVHGEPTCDLPDLDAALQGRVYGRRLPVRMSKVLMLCPRNIKIKNRVVFTGENAALQNSFIKSTTRRENYIINGPYMKFLNTYHKTLFPDTKLSSLYLWHNFSRRRSVPVPSGASAEEYSDLALFVDGGSRAHEESNVIDVVPGNLVTYAKQRLNNAILKACGQTQFYISLIQGLVPRTQSVPARDYPHVLGTRAVESAAAYAEATSSLTATTVVCAATDCLSQVCKARPVVTLPVTINKYTGVNGNNQIFQAGNLGYFMGRGVDRNLLQAPGAGLRKQAGGSSMRKKFVFATPTLGLTVKRRTQAATTYEIENIRAGLEAIISQKQEEDCVFDVVCNLVDAMGEACASLTRDDAEYLLGRFSVLADSVLETLATIASSGIEWTAGAARDFLEGVWGGPGAAQDNFISVAEPVSTASQASAGLLLGGGGQGSGGRRKRRLATVLPGLEV.

The tract at residues 1104-1128 is required for nuclear localization; the sequence is LGGGGQGSGGRRKRRLATVLPGLEV.

The protein belongs to the herpesviridae major DNA-binding protein family. As to quaternary structure, homooligomers. Forms double-helical filaments necessary for the formation of replication compartments within the host nucleus. Interacts with the origin-binding protein. Interacts with the helicase primase complex; this interaction stimulates primer synthesis activity of the helicase-primase complex. Interacts with the DNA polymerase. Interacts with the alkaline exonuclease; this interaction increases its nuclease processivity.

Its subcellular location is the virion tegument. The protein resides in the host nucleus. In terms of biological role, plays several crucial roles in viral infection. Participates in the opening of the viral DNA origin to initiate replication by interacting with the origin-binding protein. May disrupt loops, hairpins and other secondary structures present on ssDNA to reduce and eliminate pausing of viral DNA polymerase at specific sites during elongation. Promotes viral DNA recombination by performing strand-transfer, characterized by the ability to transfer a DNA strand from a linear duplex to a complementary single-stranded DNA circle. Can also catalyze the renaturation of complementary single strands. Additionally, reorganizes the host cell nucleus, leading to the formation of prereplicative sites and replication compartments. This process is driven by the protein which can form double-helical filaments in the absence of DNA. This chain is Major DNA-binding protein, found in Homo sapiens (Human).